Here is a 381-residue protein sequence, read N- to C-terminus: Carboxylesterase 5A (381 aa).

Ser108 serves as the catalytic Acyl-ester intermediate. An intrachain disulfide couples Cys162 to Cys173. N-linked (GlcNAc...) asparagine glycosylation is present at Asn163. Glu227 acts as the Charge relay system in catalysis. Residue Asn245 is glycosylated (N-linked (GlcNAc...) asparagine). His336 functions as the Charge relay system in the catalytic mechanism.

The protein belongs to the type-B carboxylesterase/lipase family. In terms of assembly, component of a epididymal complex at least composed of soluble form of prion protein PRNP, CLU, BPI, CES5A, MANBA and GLB1. Post-translationally, N-glycosylated. Detected in corpus and cauda epididymal fluid. Present in seminal fluid but not found to be associated with sperm (at protein level). Not expressed in other tissues.

It localises to the secreted. The catalysed reaction is a carboxylic ester + H2O = an alcohol + a carboxylate + H(+). Involved in the detoxification of xenobiotics and in the activation of ester and amide prodrugs. The chain is Carboxylesterase 5A (CES5A) from Ovis aries (Sheep).